A 202-amino-acid chain; its full sequence is Pyridoxal 5'-phosphate synthase subunit PdxT (202 aa).

Gly-49 to Ser-51 provides a ligand contact to L-glutamine. Catalysis depends on Cys-81, which acts as the Nucleophile. L-glutamine-binding positions include Arg-110 and Ile-139–Arg-140. Active-site charge relay system residues include His-182 and Glu-184.

Belongs to the glutaminase PdxT/SNO family. In the presence of PdxS, forms a dodecamer of heterodimers. Only shows activity in the heterodimer.

It carries out the reaction aldehydo-D-ribose 5-phosphate + D-glyceraldehyde 3-phosphate + L-glutamine = pyridoxal 5'-phosphate + L-glutamate + phosphate + 3 H2O + H(+). It catalyses the reaction L-glutamine + H2O = L-glutamate + NH4(+). Its pathway is cofactor biosynthesis; pyridoxal 5'-phosphate biosynthesis. Functionally, catalyzes the hydrolysis of glutamine to glutamate and ammonia as part of the biosynthesis of pyridoxal 5'-phosphate. The resulting ammonia molecule is channeled to the active site of PdxS. The protein is Pyridoxal 5'-phosphate synthase subunit PdxT of Rhodococcus opacus (strain B4).